The chain runs to 654 residues: Protein fem-1 homolog A (654 aa).

ANK repeat units lie at residues 2–31 (DLHT…REEI), 40–70 (GGGT…SVEA), 82–111 (EGAP…SVNR), 115–145 (TNST…DLEV), 149–178 (HGHT…QVNR), 182–211 (KGNT…RMER), and 214–243 (YGMT…GHGQ). S108 bears the Phosphoserine mark. The tract at residues 241–265 (HGQLSGTELPGEGSSQMAGNHCSTP) is disordered. The span at 253–263 (GSSQMAGNHCS) shows a compositional bias: polar residues. TPR repeat units lie at residues 283-317 (VEAL…RHQG) and 375-408 (SYYI…QQNN). ANK repeat units follow at residues 519 to 561 (NGFT…DPDS) and 565 to 594 (DNNT…HMDA). S608 carries the phosphoserine modification.

Belongs to the fem-1 family. Component of a CRL2 E3 ubiquitin-protein ligase complex, also named ECS (Elongin BC-CUL2/5-SOCS-box protein) complex, composed of CUL2, Elongin BC (ELOB and ELOC), RBX1 and substrate-specific adapter FEM1A. Interacts with PTGER4. Interacts with NFKB1; the interaction is direct. Phosphorylated; highly phosphorylated in myoblasts and myotubes. Phosphorylation at Ser-108 and Ser-608 promote PGE2-EP4-mediated inhibition of inflammation. Dephosphorylated by protein phosphatase 2A (PP2A).

It localises to the mitochondrion. The protein localises to the cytoplasm. The protein operates within protein modification; protein ubiquitination. Functionally, substrate-recognition component of a Cul2-RING (CRL2) E3 ubiquitin-protein ligase complex of the DesCEND (destruction via C-end degrons) pathway, which recognizes a C-degron located at the extreme C terminus of target proteins, leading to their ubiquitination and degradation. The C-degron recognized by the DesCEND pathway is usually a motif of less than ten residues and can be present in full-length proteins, truncated proteins or proteolytically cleaved forms. The CRL2(FEM1A) complex specifically recognizes proteins with an arginine at the C-terminus: recognizes and binds proteins ending with -Lys/Arg-Xaa-Arg and -Lys/Arg-Xaa-Xaa-Arg C-degrons, such as SIL1 or OR51B2, leading to their ubiquitination and degradation. Involved in PGE2-EP4-mediated inhibition of inflammation of macrophages via interaction with NFKB1 and PTGER4. Promotes inflammation in brain microglia through MAP2K4/MKK4-mediated signaling. In Rattus norvegicus (Rat), this protein is Protein fem-1 homolog A.